The chain runs to 67 residues: DNA-directed RNA polymerase subunit omega (67 aa).

It belongs to the RNA polymerase subunit omega family. As to quaternary structure, RNAP is composed of a core of 2 alpha, a beta and a beta' subunit. The core is associated with a delta subunit, and at least one of epsilon or omega. When a sigma factor is associated with the core the holoenzyme is formed, which can initiate transcription.

The catalysed reaction is RNA(n) + a ribonucleoside 5'-triphosphate = RNA(n+1) + diphosphate. Functionally, promotes RNA polymerase assembly. Latches the N- and C-terminal regions of the beta' subunit thereby facilitating its interaction with the beta and alpha subunits. In vitro reconstitution experiments this subunit is dispensible. The polypeptide is DNA-directed RNA polymerase subunit omega (rpoZ) (Bacillus subtilis (strain 168)).